The following is a 159-amino-acid chain: SsrA-binding protein (159 aa).

It belongs to the SmpB family.

Its subcellular location is the cytoplasm. Required for rescue of stalled ribosomes mediated by trans-translation. Binds to transfer-messenger RNA (tmRNA), required for stable association of tmRNA with ribosomes. tmRNA and SmpB together mimic tRNA shape, replacing the anticodon stem-loop with SmpB. tmRNA is encoded by the ssrA gene; the 2 termini fold to resemble tRNA(Ala) and it encodes a 'tag peptide', a short internal open reading frame. During trans-translation Ala-aminoacylated tmRNA acts like a tRNA, entering the A-site of stalled ribosomes, displacing the stalled mRNA. The ribosome then switches to translate the ORF on the tmRNA; the nascent peptide is terminated with the 'tag peptide' encoded by the tmRNA and targeted for degradation. The ribosome is freed to recommence translation, which seems to be the essential function of trans-translation. The protein is SsrA-binding protein of Idiomarina loihiensis (strain ATCC BAA-735 / DSM 15497 / L2-TR).